The following is a 714-amino-acid chain: Fatty acid oxidation complex subunit alpha (714 aa).

Positions 1–190 (MEMASAFTLN…KLGLVDDVVP (190 aa)) are enoyl-CoA hydratase. Residues 306 to 714 (APLNSVGILG…FWKTTATDLQ (409 aa)) form a 3-hydroxyacyl-CoA dehydrogenase region.

The protein in the N-terminal section; belongs to the enoyl-CoA hydratase/isomerase family. It in the central section; belongs to the 3-hydroxyacyl-CoA dehydrogenase family. In terms of assembly, heterotetramer of two alpha chains (FadJ) and two beta chains (FadI).

It is found in the cytoplasm. The catalysed reaction is a (3S)-3-hydroxyacyl-CoA = a (2E)-enoyl-CoA + H2O. The enzyme catalyses a 4-saturated-(3S)-3-hydroxyacyl-CoA = a (3E)-enoyl-CoA + H2O. It carries out the reaction a (3S)-3-hydroxyacyl-CoA + NAD(+) = a 3-oxoacyl-CoA + NADH + H(+). It catalyses the reaction (3S)-3-hydroxybutanoyl-CoA = (3R)-3-hydroxybutanoyl-CoA. The protein operates within lipid metabolism; fatty acid beta-oxidation. Catalyzes the formation of a hydroxyacyl-CoA by addition of water on enoyl-CoA. Also exhibits 3-hydroxyacyl-CoA epimerase and 3-hydroxyacyl-CoA dehydrogenase activities. This chain is Fatty acid oxidation complex subunit alpha, found in Escherichia coli O6:H1 (strain CFT073 / ATCC 700928 / UPEC).